Reading from the N-terminus, the 415-residue chain is Multifunctional CCA protein (415 aa).

ATP contacts are provided by Gly-8 and Arg-11. The CTP site is built by Gly-8 and Arg-11. Mg(2+) is bound by residues Asp-21 and Asp-23. Positions 91, 137, and 140 each coordinate ATP. CTP is bound by residues Arg-91, Arg-137, and Arg-140. Residues 228 to 329 form the HD domain; that stretch reads TGIHTLMTLA…VGLFDSIDAW (102 aa).

It belongs to the tRNA nucleotidyltransferase/poly(A) polymerase family. Bacterial CCA-adding enzyme type 1 subfamily. As to quaternary structure, monomer. Can also form homodimers and oligomers. Mg(2+) serves as cofactor. The cofactor is Ni(2+).

The enzyme catalyses a tRNA precursor + 2 CTP + ATP = a tRNA with a 3' CCA end + 3 diphosphate. It catalyses the reaction a tRNA with a 3' CCA end + 2 CTP + ATP = a tRNA with a 3' CCACCA end + 3 diphosphate. Catalyzes the addition and repair of the essential 3'-terminal CCA sequence in tRNAs without using a nucleic acid template. Adds these three nucleotides in the order of C, C, and A to the tRNA nucleotide-73, using CTP and ATP as substrates and producing inorganic pyrophosphate. tRNA 3'-terminal CCA addition is required both for tRNA processing and repair. Also involved in tRNA surveillance by mediating tandem CCA addition to generate a CCACCA at the 3' terminus of unstable tRNAs. While stable tRNAs receive only 3'-terminal CCA, unstable tRNAs are marked with CCACCA and rapidly degraded. The chain is Multifunctional CCA protein from Cronobacter sakazakii (strain ATCC BAA-894) (Enterobacter sakazakii).